A 295-amino-acid polypeptide reads, in one-letter code: Xyloglucan endotransglucosylase/hydrolase (295 aa).

A signal peptide spans 1–23; the sequence is MAVSSTPWALVALFLMASSTVMA. One can recognise a GH16 domain in the interval 25–222; sequence PPRKAIDVPF…WANAPFIASY (198 aa). Glutamate 108 acts as the Nucleophile in catalysis. The active-site Proton donor is the glutamate 112. Position 112 (glutamate 112) interacts with xyloglucan. A glycan (N-linked (GlcNAc...) asparagine) is linked at asparagine 116. Xyloglucan is bound by residues 125–127, 135–137, 201–202, and glycine 206; these read QTN, NRE, and DW. Cystine bridges form between cysteine 230/cysteine 239 and cysteine 276/cysteine 289. Arginine 281 is a xyloglucan binding site.

The protein belongs to the glycosyl hydrolase 16 family. XTH group 1 subfamily. Contains at least one intrachain disulfide bond essential for its enzymatic activity. In terms of processing, the N-glycan consists of an (GlcNAc)2(Hex)6 oligosaccharide; not essential for its enzymatic activity.

The protein resides in the secreted. It is found in the cell wall. It localises to the extracellular space. Its subcellular location is the apoplast. It carries out the reaction breaks a beta-(1-&gt;4) bond in the backbone of a xyloglucan and transfers the xyloglucanyl segment on to O-4 of the non-reducing terminal glucose residue of an acceptor, which can be a xyloglucan or an oligosaccharide of xyloglucan.. In terms of biological role, catalyzes xyloglucan endohydrolysis (XEH) and/or endotransglycosylation (XET). Cleaves and religates xyloglucan polymers, an essential constituent of the primary cell wall, and thereby participates in cell wall construction of growing tissues. The protein is Xyloglucan endotransglucosylase/hydrolase (XET16A) of Brassica oleracea var. botrytis (Cauliflower).